The chain runs to 57 residues: Large ribosomal subunit protein bL32 (57 aa).

A disordered region spans residues 1–21 (MAVPKRRTSKKVKNQRRTHKK).

The protein belongs to the bacterial ribosomal protein bL32 family.

In Oceanobacillus iheyensis (strain DSM 14371 / CIP 107618 / JCM 11309 / KCTC 3954 / HTE831), this protein is Large ribosomal subunit protein bL32.